Consider the following 489-residue polypeptide: Glutamate--tRNA ligase (489 aa).

Positions 10-20 (PSPTGFLHIGG) match the 'HIGH' region motif. The 'KMSKS' region motif lies at 261 to 265 (KLSKR). Lys-264 serves as a coordination point for ATP.

The protein belongs to the class-I aminoacyl-tRNA synthetase family. Glutamate--tRNA ligase type 1 subfamily. In terms of assembly, monomer.

It localises to the cytoplasm. The enzyme catalyses tRNA(Glu) + L-glutamate + ATP = L-glutamyl-tRNA(Glu) + AMP + diphosphate. In terms of biological role, catalyzes the attachment of glutamate to tRNA(Glu) in a two-step reaction: glutamate is first activated by ATP to form Glu-AMP and then transferred to the acceptor end of tRNA(Glu). This is Glutamate--tRNA ligase from Finegoldia magna (strain ATCC 29328 / DSM 20472 / WAL 2508) (Peptostreptococcus magnus).